The chain runs to 229 residues: Deoxyribose-phosphate aldolase (229 aa).

Asp96 (proton donor/acceptor) is an active-site residue. Catalysis depends on Lys166, which acts as the Schiff-base intermediate with acetaldehyde. Lys195 acts as the Proton donor/acceptor in catalysis.

Belongs to the DeoC/FbaB aldolase family. DeoC type 1 subfamily.

The protein resides in the cytoplasm. The enzyme catalyses 2-deoxy-D-ribose 5-phosphate = D-glyceraldehyde 3-phosphate + acetaldehyde. The protein operates within carbohydrate degradation; 2-deoxy-D-ribose 1-phosphate degradation; D-glyceraldehyde 3-phosphate and acetaldehyde from 2-deoxy-alpha-D-ribose 1-phosphate: step 2/2. Its function is as follows. Catalyzes a reversible aldol reaction between acetaldehyde and D-glyceraldehyde 3-phosphate to generate 2-deoxy-D-ribose 5-phosphate. This Micrococcus luteus (strain ATCC 4698 / DSM 20030 / JCM 1464 / CCM 169 / CCUG 5858 / IAM 1056 / NBRC 3333 / NCIMB 9278 / NCTC 2665 / VKM Ac-2230) (Micrococcus lysodeikticus) protein is Deoxyribose-phosphate aldolase.